The primary structure comprises 89 residues: Small ribosomal subunit protein uS17 (89 aa).

Belongs to the universal ribosomal protein uS17 family. In terms of assembly, part of the 30S ribosomal subunit.

One of the primary rRNA binding proteins, it binds specifically to the 5'-end of 16S ribosomal RNA. The protein is Small ribosomal subunit protein uS17 of Verminephrobacter eiseniae (strain EF01-2).